The following is a 317-amino-acid chain: Glycine--tRNA ligase alpha subunit (317 aa).

This sequence belongs to the class-II aminoacyl-tRNA synthetase family. Tetramer of two alpha and two beta subunits.

The protein resides in the cytoplasm. The catalysed reaction is tRNA(Gly) + glycine + ATP = glycyl-tRNA(Gly) + AMP + diphosphate. In Pseudomonas fluorescens (strain ATCC BAA-477 / NRRL B-23932 / Pf-5), this protein is Glycine--tRNA ligase alpha subunit.